The chain runs to 289 residues: Pseudouridine-5'-phosphate glycosidase (289 aa).

The active-site Proton donor is Glu-10. Positions 71 and 91 each coordinate substrate. Mn(2+) is bound at residue Asp-121. 123-125 serves as a coordination point for substrate; that stretch reads SQD. The active-site Nucleophile is the Lys-142.

Belongs to the pseudouridine-5'-phosphate glycosidase family. In terms of assembly, homotrimer. Requires Mn(2+) as cofactor.

It carries out the reaction D-ribose 5-phosphate + uracil = psi-UMP + H2O. In terms of biological role, catalyzes the reversible cleavage of pseudouridine 5'-phosphate (PsiMP) to ribose 5-phosphate and uracil. Functions biologically in the cleavage direction, as part of a pseudouridine degradation pathway. The chain is Pseudouridine-5'-phosphate glycosidase from Kosmotoga olearia (strain ATCC BAA-1733 / DSM 21960 / TBF 19.5.1).